The following is a 158-amino-acid chain: Small ribosomal subunit protein uS7 (158 aa).

This sequence belongs to the universal ribosomal protein uS7 family. As to quaternary structure, part of the 30S ribosomal subunit. Contacts proteins S9 and S11.

In terms of biological role, one of the primary rRNA binding proteins, it binds directly to 16S rRNA where it nucleates assembly of the head domain of the 30S subunit. Is located at the subunit interface close to the decoding center, probably blocks exit of the E-site tRNA. The polypeptide is Small ribosomal subunit protein uS7 (Parabacteroides distasonis (strain ATCC 8503 / DSM 20701 / CIP 104284 / JCM 5825 / NCTC 11152)).